We begin with the raw amino-acid sequence, 143 residues long: Large-conductance mechanosensitive channel (143 aa).

Helical transmembrane passes span 19–39 and 81–101; these read VGVIIGAAFGAIVTSMVGDLI and GSFLTITLNFLIVAGVLFGVI.

Belongs to the MscL family. As to quaternary structure, homopentamer.

Its subcellular location is the cell inner membrane. In terms of biological role, channel that opens in response to stretch forces in the membrane lipid bilayer. May participate in the regulation of osmotic pressure changes within the cell. This Rhodopseudomonas palustris (strain BisB5) protein is Large-conductance mechanosensitive channel.